The chain runs to 320 residues: Polynucleotide 5'-triphosphatase CTL1 (320 aa).

Residues 1-12 are compositionally biased toward polar residues; sequence MSDQPETPSNSR. The disordered stretch occupies residues 1-23; the sequence is MSDQPETPSNSRNSHENVGAKKA. Positions 13–23 are enriched in basic and acidic residues; it reads NSHENVGAKKA.

The protein belongs to the fungal TPase family. It depends on Mg(2+) as a cofactor. Mn(2+) serves as cofactor.

It localises to the cytoplasm. Its subcellular location is the nucleus. The enzyme catalyses a 5'-end triphospho-ribonucleoside in mRNA + H2O = a 5'-end diphospho-ribonucleoside in mRNA + phosphate + H(+). Functionally, probably involved in an RNA processing event other than mRNA capping. Releases gamma-phosphate from the 5'-end of RNA to produce a diphosphate terminus. The chain is Polynucleotide 5'-triphosphatase CTL1 from Saccharomyces cerevisiae (strain ATCC 204508 / S288c) (Baker's yeast).